The chain runs to 213 residues: ATP phosphoribosyltransferase (213 aa).

The protein belongs to the ATP phosphoribosyltransferase family. Short subfamily. As to quaternary structure, heteromultimer composed of HisG and HisZ subunits.

The protein localises to the cytoplasm. It catalyses the reaction 1-(5-phospho-beta-D-ribosyl)-ATP + diphosphate = 5-phospho-alpha-D-ribose 1-diphosphate + ATP. It functions in the pathway amino-acid biosynthesis; L-histidine biosynthesis; L-histidine from 5-phospho-alpha-D-ribose 1-diphosphate: step 1/9. Catalyzes the condensation of ATP and 5-phosphoribose 1-diphosphate to form N'-(5'-phosphoribosyl)-ATP (PR-ATP). Has a crucial role in the pathway because the rate of histidine biosynthesis seems to be controlled primarily by regulation of HisG enzymatic activity. The polypeptide is ATP phosphoribosyltransferase (Shouchella clausii (strain KSM-K16) (Alkalihalobacillus clausii)).